The primary structure comprises 279 residues: 3-methyl-2-oxobutanoate hydroxymethyltransferase (279 aa).

The Mg(2+) site is built by aspartate 44 and aspartate 83. 3-methyl-2-oxobutanoate contacts are provided by residues aspartate 44–serine 45, aspartate 83, and lysine 112. Glutamate 114 serves as a coordination point for Mg(2+). Glutamate 181 acts as the Proton acceptor in catalysis.

Belongs to the PanB family. As to quaternary structure, homodecamer; pentamer of dimers. It depends on Mg(2+) as a cofactor.

The protein localises to the cytoplasm. It carries out the reaction 3-methyl-2-oxobutanoate + (6R)-5,10-methylene-5,6,7,8-tetrahydrofolate + H2O = 2-dehydropantoate + (6S)-5,6,7,8-tetrahydrofolate. The protein operates within cofactor biosynthesis; coenzyme A biosynthesis. Functionally, catalyzes the reversible reaction in which hydroxymethyl group from 5,10-methylenetetrahydrofolate is transferred onto alpha-ketoisovalerate to form ketopantoate. The protein is 3-methyl-2-oxobutanoate hydroxymethyltransferase of Nitrosopumilus maritimus (strain SCM1).